The chain runs to 154 residues: Iron-sulfur cluster assembly 2 homolog, mitochondrial (154 aa).

The N-terminal 8 residues, M1–S8, are a transit peptide targeting the mitochondrion. Residues C79, C144, and C146 each coordinate Fe cation.

Belongs to the HesB/IscA family. In terms of assembly, heterotetramer; forms a dimer of dimers with IBA57. Interacts with [2Fe-2S]-ISCA2 forming the heterodimer [2Fe- 2S]-ISCA2-IBA57 complex; [2Fe-2S] cluster binding is absolutely required to promote the complex formation.

It is found in the mitochondrion. Functionally, involved in the maturation of mitochondrial 4Fe-4S proteins functioning late in the iron-sulfur cluster assembly pathway. May be involved in the binding of an intermediate of Fe/S cluster assembly. The polypeptide is Iron-sulfur cluster assembly 2 homolog, mitochondrial (ISCA2) (Pongo abelii (Sumatran orangutan)).